A 405-amino-acid chain; its full sequence is 4-hydroxy-3-methylbut-2-enyl diphosphate reductase (405 aa).

A [4Fe-4S] cluster-binding site is contributed by Cys-66. Residue His-96 participates in (2E)-4-hydroxy-3-methylbut-2-enyl diphosphate binding. Position 96 (His-96) interacts with dimethylallyl diphosphate. His-96 lines the isopentenyl diphosphate pocket. Cys-158 lines the [4Fe-4S] cluster pocket. His-186 provides a ligand contact to (2E)-4-hydroxy-3-methylbut-2-enyl diphosphate. His-186 serves as a coordination point for dimethylallyl diphosphate. His-186 contacts isopentenyl diphosphate. Glu-188 functions as the Proton donor in the catalytic mechanism. Thr-251 contacts (2E)-4-hydroxy-3-methylbut-2-enyl diphosphate. Cys-289 is a [4Fe-4S] cluster binding site. (2E)-4-hydroxy-3-methylbut-2-enyl diphosphate is bound by residues Ser-318, Ser-319, Asn-320, and Ser-380. The dimethylallyl diphosphate site is built by Ser-318, Ser-319, Asn-320, and Ser-380. Ser-318, Ser-319, Asn-320, and Ser-380 together coordinate isopentenyl diphosphate.

This sequence belongs to the IspH family. The cofactor is [4Fe-4S] cluster.

The catalysed reaction is isopentenyl diphosphate + 2 oxidized [2Fe-2S]-[ferredoxin] + H2O = (2E)-4-hydroxy-3-methylbut-2-enyl diphosphate + 2 reduced [2Fe-2S]-[ferredoxin] + 2 H(+). It catalyses the reaction dimethylallyl diphosphate + 2 oxidized [2Fe-2S]-[ferredoxin] + H2O = (2E)-4-hydroxy-3-methylbut-2-enyl diphosphate + 2 reduced [2Fe-2S]-[ferredoxin] + 2 H(+). The protein operates within isoprenoid biosynthesis; dimethylallyl diphosphate biosynthesis; dimethylallyl diphosphate from (2E)-4-hydroxy-3-methylbutenyl diphosphate: step 1/1. Its pathway is isoprenoid biosynthesis; isopentenyl diphosphate biosynthesis via DXP pathway; isopentenyl diphosphate from 1-deoxy-D-xylulose 5-phosphate: step 6/6. Functionally, catalyzes the conversion of 1-hydroxy-2-methyl-2-(E)-butenyl 4-diphosphate (HMBPP) into a mixture of isopentenyl diphosphate (IPP) and dimethylallyl diphosphate (DMAPP). Acts in the terminal step of the DOXP/MEP pathway for isoprenoid precursor biosynthesis. The protein is 4-hydroxy-3-methylbut-2-enyl diphosphate reductase of Cyanothece sp. (strain PCC 7425 / ATCC 29141).